The sequence spans 348 residues: Dihydroorotase (348 aa).

Zn(2+) is bound by residues H14 and H16. Substrate is bound by residues 16–18 (HLR) and N42. Residues K100, H137, and H175 each contribute to the Zn(2+) site. Position 100 is an N6-carboxylysine (K100). Substrate is bound at residue H137. A substrate-binding site is contributed by L220. Zn(2+) is bound at residue D248. D248 is a catalytic residue. The substrate site is built by H252 and A264.

This sequence belongs to the metallo-dependent hydrolases superfamily. DHOase family. Class II DHOase subfamily. Homodimer. It depends on Zn(2+) as a cofactor.

It carries out the reaction (S)-dihydroorotate + H2O = N-carbamoyl-L-aspartate + H(+). Its pathway is pyrimidine metabolism; UMP biosynthesis via de novo pathway; (S)-dihydroorotate from bicarbonate: step 3/3. Catalyzes the reversible cyclization of carbamoyl aspartate to dihydroorotate. The chain is Dihydroorotase from Pseudomonas fluorescens (strain SBW25).